Consider the following 521-residue polypeptide: Colicin-E1* (521 aa).

Disordered regions lie at residues 26-52 and 127-163; these read NGNP…AAIH and SGCA…EKEQ. Residues 30 to 42 are compositionally biased toward gly residues; sequence DGSGSGGGGGTGG. Positions 133-145 are enriched in basic residues; sequence KQKKKPVKKRKRA. Residues 146 to 163 are compositionally biased toward basic and acidic residues; sequence EKSFQEAEQRRKEIEKEQ. Helical transmembrane passes span 470–486 and 493–509; these read AVDA…FSVL and IWGI…FIDK.

It belongs to the channel forming colicin family.

The protein resides in the cell membrane. This colicin is a channel-forming colicin. This class of transmembrane toxins depolarize the cytoplasmic membrane, leading to dissipation of cellular energy. Its function is as follows. Colicins are polypeptide toxins produced by and active against E.coli and closely related bacteria. In Shigella sonnei, this protein is Colicin-E1* (cea).